The sequence spans 344 residues: Anthranilate phosphoribosyltransferase (344 aa).

5-phospho-alpha-D-ribose 1-diphosphate-binding positions include Gly83, 86–87 (GD), Thr91, 93–96 (NIST), 111–119 (KHGGRSVSS), and Ser123. Gly83 provides a ligand contact to anthranilate. Ser95 lines the Mg(2+) pocket. Arg169 is an anthranilate binding site. Positions 228 and 229 each coordinate Mg(2+).

It belongs to the anthranilate phosphoribosyltransferase family. As to quaternary structure, homodimer. Mg(2+) serves as cofactor.

The enzyme catalyses N-(5-phospho-beta-D-ribosyl)anthranilate + diphosphate = 5-phospho-alpha-D-ribose 1-diphosphate + anthranilate. The protein operates within amino-acid biosynthesis; L-tryptophan biosynthesis; L-tryptophan from chorismate: step 2/5. Functionally, catalyzes the transfer of the phosphoribosyl group of 5-phosphorylribose-1-pyrophosphate (PRPP) to anthranilate to yield N-(5'-phosphoribosyl)-anthranilate (PRA). The protein is Anthranilate phosphoribosyltransferase of Methylibium petroleiphilum (strain ATCC BAA-1232 / LMG 22953 / PM1).